Consider the following 491-residue polypeptide: 4,4'-diapolycopen-4-al dehydrogenase (491 aa).

Glu-208 is a catalytic residue.

The protein belongs to the carotenoid/retinoid oxidoreductase family. CrtN subfamily.

The catalysed reaction is all-trans-4,4'-diapolycopen-4-al + A + H2O = all-trans-4,4'-diapolycopen-4-oate + AH2 + H(+). It participates in carotenoid biosynthesis. Its function is as follows. Involved in the biosynthesis of the major C30 carotenoid methyl 4'-[6-O-(acylglycosyl)oxy]-4,4'-diapolycopen-4-oic acid via 4,4'-diapolycopen-4-oic acid intermediate. Catalyzes the oxidation of 4,4'-diapolycopen-4-al to yield 4,4'-diapolycopen-4-oic acid. In Metabacillus indicus (Bacillus indicus), this protein is 4,4'-diapolycopen-4-al dehydrogenase.